We begin with the raw amino-acid sequence, 123 residues long: Small ribosomal subunit protein uS12 (123 aa).

A disordered region spans residues Met1–Ala26. Asp89 bears the 3-methylthioaspartic acid mark. A disordered region spans residues Thr104–Lys123. Basic residues predominate over residues Lys108–Lys123.

This sequence belongs to the universal ribosomal protein uS12 family. In terms of assembly, part of the 30S ribosomal subunit. Contacts proteins S8 and S17. May interact with IF1 in the 30S initiation complex.

With S4 and S5 plays an important role in translational accuracy. Its function is as follows. Interacts with and stabilizes bases of the 16S rRNA that are involved in tRNA selection in the A site and with the mRNA backbone. Located at the interface of the 30S and 50S subunits, it traverses the body of the 30S subunit contacting proteins on the other side and probably holding the rRNA structure together. The combined cluster of proteins S8, S12 and S17 appears to hold together the shoulder and platform of the 30S subunit. The protein is Small ribosomal subunit protein uS12 of Acidithiobacillus ferrooxidans (strain ATCC 23270 / DSM 14882 / CIP 104768 / NCIMB 8455) (Ferrobacillus ferrooxidans (strain ATCC 23270)).